The chain runs to 439 residues: Probable aspartic proteinase GIP2 (439 aa).

An N-terminal signal peptide occupies residues 1 to 23 (MASSCCLHAILLCSLLFITSTTA). In terms of domain architecture, Peptidase A1 spans 47–420 (YLTQIQQRTP…DLARSRLGFT (374 aa)). N-linked (GlcNAc...) asparagine glycosylation is found at Asn116, Asn280, Asn323, and Asn434.

It belongs to the peptidase A1 family. As to quaternary structure, interacts with the Phytophtora parasitica xyloglucanase XEG1 and xyloglucanase-like XLP1. Possesses stronger binding affinity with XLP1, a truncated paralog of P.parasitica XEG1 which has no enzyme activity.

The protein resides in the secreted. The protein localises to the extracellular space. Its subcellular location is the apoplast. Functionally, involved in plant defense against Phytophtora parasitica. Contributes positively to Nicotiana resistance against P.parasitica. Binds the P.parasitica xyloglucanase XEG1 and inhibits its cell wall degrading enzyme activity and its contribution as P.parasitica virulence factor. XEG1 acts as an important virulence factor during P.parasitica infection but also acts as a pathogen-associated molecular pattern (PAMP) in Nictotiana species, where it can trigger defense responses including cell death. (Microbial infection) Possesses stronger binding affinity with XLP1, a truncated paralog of P.parasitica XEG1 which has no enzyme activity. Is impaired in its inhibitor activity towards the P.parasitica xyloglucanase XEG1 when hijacked by XLP1 binding. In Nicotiana benthamiana, this protein is Probable aspartic proteinase GIP2.